Consider the following 158-residue polypeptide: Large ribosomal subunit protein bL19 (158 aa).

Residues 1-35 (MTADSKDTSMSEDNTETATAIENSSAMVTDVTSKS) are disordered. Residues 16-35 (ETATAIENSSAMVTDVTSKS) are compositionally biased toward polar residues.

It belongs to the bacterial ribosomal protein bL19 family.

Its function is as follows. This protein is located at the 30S-50S ribosomal subunit interface and may play a role in the structure and function of the aminoacyl-tRNA binding site. The polypeptide is Large ribosomal subunit protein bL19 (Prochlorococcus marinus (strain MIT 9313)).